We begin with the raw amino-acid sequence, 91 residues long: Small membrane A-kinase anchor protein (91 aa).

A lipid anchor (N-myristoyl glycine) is attached at Gly2.

The protein belongs to the small membrane AKAP family. In terms of processing, may be palmitoylated at Cys-3.

The protein resides in the cell membrane. Its function is as follows. Binds to type I regulatory subunits of protein kinase A and may anchor/target them to the plasma membrane. This chain is Small membrane A-kinase anchor protein, found in Xenopus laevis (African clawed frog).